Here is a 364-residue protein sequence, read N- to C-terminus: Fructose-bisphosphate aldolase B (364 aa).

Substrate-binding residues include Arg56 and Lys147. Glu188 (proton acceptor) is an active-site residue. Residue Lys230 is the Schiff-base intermediate with dihydroxyacetone-P of the active site.

It belongs to the class I fructose-bisphosphate aldolase family. In terms of assembly, homotetramer.

The protein resides in the cytoplasm. It localises to the cytoskeleton. Its subcellular location is the microtubule organizing center. The protein localises to the centrosome. It is found in the centriolar satellite. It catalyses the reaction beta-D-fructose 1,6-bisphosphate = D-glyceraldehyde 3-phosphate + dihydroxyacetone phosphate. It participates in carbohydrate degradation; glycolysis; D-glyceraldehyde 3-phosphate and glycerone phosphate from D-glucose: step 4/4. This Sparus aurata (Gilthead sea bream) protein is Fructose-bisphosphate aldolase B (aldob).